Reading from the N-terminus, the 511-residue chain is Maturase K (511 aa).

It belongs to the intron maturase 2 family. MatK subfamily.

It is found in the plastid. The protein resides in the chloroplast. Functionally, usually encoded in the trnK tRNA gene intron. Probably assists in splicing its own and other chloroplast group II introns. This Poa pratensis (Kentucky bluegrass) protein is Maturase K.